The chain runs to 179 residues: Large ribosomal subunit protein uL6 (179 aa).

The disordered stretch occupies residues 151–179 (RKPEPYKGKGIKYDNEQIRRKAGKSGGKK). The span at 152 to 169 (KPEPYKGKGIKYDNEQIR) shows a compositional bias: basic and acidic residues. A compositionally biased stretch (basic residues) spans 170-179 (RKAGKSGGKK).

The protein belongs to the universal ribosomal protein uL6 family. In terms of assembly, part of the 50S ribosomal subunit.

This protein binds to the 23S rRNA, and is important in its secondary structure. It is located near the subunit interface in the base of the L7/L12 stalk, and near the tRNA binding site of the peptidyltransferase center. The sequence is that of Large ribosomal subunit protein uL6 from Nitratidesulfovibrio vulgaris (strain ATCC 29579 / DSM 644 / CCUG 34227 / NCIMB 8303 / VKM B-1760 / Hildenborough) (Desulfovibrio vulgaris).